A 463-amino-acid chain; its full sequence is MELRAWVLLWRLVLLQSSAVLLSSGPSGPATSDRSVVSESTVSWAAGARAVLRCQSPRMVWTQDRLHDRQRVVHWDLSGSKAGGPARRLVDMYSTGEQRVGEQRLGEQRVGEQRVYEPRDRGRLLLPPSAFHDGNFSLFIRAVEETDEGLYTCNLHHHYCHLYESLAVSLEVTDDPRAAGAHWDGEKEVLAVERGAPALLTCVNRAHVWTDRHLEEAQQVVHWDRQPPGVPHDRADRLLDLYASGERRAYGPPFLRDRVAVEADAFARGDFSLLIDPVEPADEGTYSCHLHHHYCGLHERRVFHLRVTEPAARPPPPPRDSPGNGSSHSGAPGPGARDPTLTRGRSVINVIVPEGRAHFFQQLGYVLATLLLFILLLITVVLATRQRRRGGYEYSNKKSKSKGKDINMAEFAVASGDQSLYRSEDIRLDYKNNILKERAEVAHSLPPAKNIDLDKEFRKEYCK.

An N-terminal signal peptide occupies residues 1-19; that stretch reads MELRAWVLLWRLVLLQSSA. The Extracellular portion of the chain corresponds to 20–362; that stretch reads VLLSSGPSGP…PEGRAHFFQQ (343 aa). Ig-like V-type domains are found at residues 29 to 173 and 176 to 308; these read PATS…LEVT and PRAA…LRVT. 2 disulfide bridges follow: C54-C153 and C202-C288. A glycan (N-linked (GlcNAc...) asparagine) is linked at N135. A Phosphoserine modification is found at S244. The short motif at 268 to 270 is the RGD element; it reads RGD. The segment at 309-341 is disordered; sequence EPAARPPPPPRDSPGNGSSHSGAPGPGARDPTL. Residues 321–335 show a composition bias toward low complexity; the sequence is SPGNGSSHSGAPGPG. The N-linked (GlcNAc...) asparagine glycan is linked to N324. Residues 363-383 form a helical membrane-spanning segment; it reads LGYVLATLLLFILLLITVVLA. Residues 384-463 lie on the Cytoplasmic side of the membrane; that stretch reads TRQRRRGGYE…DKEFRKEYCK (80 aa).

Homodimer in cis. Does not appear to form trans-homodimers. Interacts with ITGB3; the interaction inhibits ITGAV:ITGB3 heterodimer formation.

Its subcellular location is the cell membrane. The protein localises to the cell junction. It localises to the tight junction. It is found in the cytoplasm. The protein resides in the cell projection. Its subcellular location is the cilium membrane. The protein localises to the nucleus. Transmembrane protein which can modulate activity of various signaling pathways, probably via binding to integrin ITGAV:ITGB3. Mediates heterophilic cell-cell interactions in vitro. Inhibits osteoclastogenesis downstream of TNFSF11/RANKL and CSF1, where it may function by attenuating signaling via integrin ITGB3 and MAP kinase p38. Plays a role in cartilage formation where it promotes proliferation and maturation of growth plate chondrocytes. Stimulates formation of primary cilia in chondrocytes. Enhances expression of genes involved in the hedgehog signaling pathway in chondrocytes, including the hedgehog signaling molecule IHH; may also promote signaling via the PTHLH/PTHrP pathway. Plays a role in angiogenesis where it suppresses migration of endothelial cells and also promotes their apoptosis. Inhibits VEGF-induced activation of AKT and p38 MAP kinase in endothelial cells. Also inhibits VTN (vitronectin)-mediated integrin ITGAV:ITGB3 signaling and activation of PTK2/FAK. May play a role in the maturation and maintenance of the blood-brain barrier. This chain is Matrix remodeling-associated protein 8 (MXRA8), found in Bos taurus (Bovine).